The chain runs to 271 residues: Aquaporin-2 (271 aa).

The Cytoplasmic segment spans residues 1 to 11 (MWELRSIAFSR). A helical transmembrane segment spans residues 12-32 (AVLAEFLATLLFVFFGLGSAL). Residues 33–40 (NWPQALPS) lie on the Extracellular side of the membrane. A helical transmembrane segment spans residues 41 to 59 (VLQIAMAFGLAIGTLVQAL). The Cytoplasmic portion of the chain corresponds to 60–64 (GHVSG). The discontinuously helical intramembrane region spans 65–74 (AHINPAVTVA). Residues 68-70 (NPA) carry the NPA 1 motif. At 75–85 (CLVGCHVSFLR) the chain is on the cytoplasmic side. Residues 86–107 (AVFYVAAQLLGAVAGAALLHEI) traverse the membrane as a helical segment. Residues 108-127 (TPPAIRGDLAVNALNNNSTA) lie on the Extracellular side of the membrane. Residues Asn-123 and Asn-124 are each glycosylated (N-linked (GlcNAc...) asparagine). A helical transmembrane segment spans residues 128-148 (GQAVTVELFLTLQLVLCIFPS). Residues 149 to 156 (TDKRRGKQ) are Cytoplasmic-facing. Residues 157 to 176 (LGHPALSIGFSVALGHLLGI) traverse the membrane as a helical segment. Topologically, residues 177–180 (HYTG) are extracellular. Residues 181-193 (CSMNPARSLAPAI) constitute an intramembrane region (discontinuously helical). An NPA 2 motif is present at residues 184–186 (NPA). Over 194-201 (VTGKFDDH) the chain is Extracellular. Residues 202–222 (WVFWIGPLVGAIVASLLYNYV) traverse the membrane as a helical segment. Residues 223–271 (LFPPAKSLSERLAVLKGLEPDTDWEEREVRRRQSVELHSPQSLPRGTKA) lie on the Cytoplasmic side of the membrane. Positions 249–271 (REVRRRQSVELHSPQSLPRGTKA) are disordered. Ser-256 carries the phosphoserine modification. The span at 261-271 (SPQSLPRGTKA) shows a compositional bias: polar residues.

It belongs to the MIP/aquaporin (TC 1.A.8) family. As to quaternary structure, homotetramer. Ser-256 phosphorylation is necessary and sufficient for expression at the apical membrane. Endocytosis is not phosphorylation-dependent. In terms of processing, N-glycosylated. As to expression, expressed in renal collecting tubules.

The protein resides in the apical cell membrane. It is found in the basolateral cell membrane. Its subcellular location is the cell membrane. It localises to the cytoplasmic vesicle membrane. The protein localises to the golgi apparatus. The protein resides in the trans-Golgi network membrane. The enzyme catalyses H2O(in) = H2O(out). The catalysed reaction is glycerol(in) = glycerol(out). Functionally, forms a water-specific channel that provides the plasma membranes of renal collecting duct with high permeability to water, thereby permitting water to move in the direction of an osmotic gradient. Could also be permeable to glycerol. The chain is Aquaporin-2 from Ovis aries (Sheep).